The following is a 617-amino-acid chain: Protein 4.1 (617 aa).

Residues 1–282 (MHCKVSLLDD…EHHTFFRLTS (282 aa)) enclose the FERM domain. Phosphotyrosine is present on Y13. A Phosphothreonine modification is found at T169. Residues 308–401 (TRQASALIDR…AEPEPSEAWK (94 aa)) form a disordered region. 3 positions are modified to phosphoserine: S312, S331, and S333. A compositionally biased stretch (low complexity) spans 348–361 (RPTSAPAIAPSPAA). The segment covering 387 to 396 (APPEDAEPEP) has biased composition (acidic residues). The tract at residues 401-466 (KKKRERLDGE…WDKRLSTHSP (66 aa)) is spectrin--actin-binding. A Phosphotyrosine; by EGFR modification is found at Y413. Residues S417, S427, S437, and S462 each carry the phosphoserine modification. Phosphoserine; by CDK1 is present on S465. The tract at residues 467–617 (FRTLNINGQI…VHQETEISEE (151 aa)) is C-terminal (CTD). 2 positions are modified to phosphothreonine: T489 and T612.

In terms of assembly, binds with a high affinity to glycophorin and with lower affinity to band III protein. Associates with the nuclear mitotic apparatus. Binds calmodulin, CPAP and DLG1. Also found to associate with contractile apparatus and tight junctions. Interacts with NUMA1; this interaction is negatively regulated by CDK1 during metaphase and promotes anaphase-specific localization of NUMA1 in symmetrically dividing cells. Interacts with ATP2B1; regulates small intestinal calcium absorption through regulation of membrane expression of ATP2B1. Post-translationally, phosphorylated at multiple sites by different protein kinases and each phosphorylation event selectively modulates the protein's functions. Phosphorylation on Tyr-413 reduces the ability of 4.1 to promote the assembly of the spectrin/actin/4.1 ternary complex.

It localises to the nucleus. The protein localises to the cytoplasm. Its subcellular location is the cytoskeleton. The protein resides in the cell cortex. Functionally, protein 4.1 is a major structural element of the erythrocyte membrane skeleton. It plays a key role in regulating membrane physical properties of mechanical stability and deformability by stabilizing spectrin-actin interaction. Recruits DLG1 to membranes. Required for dynein-dynactin complex and NUMA1 recruitment at the mitotic cell cortex during anaphase. This Bos taurus (Bovine) protein is Protein 4.1.